Here is an 87-residue protein sequence, read N- to C-terminus: MGEGVYVRLWFPKDITKILGEKRLEEEAKLLVAIELYREGIVSLGKAAEIADLSIREFLYELRRRNVPLNYDLEELQKDIDVVGELL.

This sequence belongs to the UPF0175 family.

In Archaeoglobus fulgidus (strain ATCC 49558 / DSM 4304 / JCM 9628 / NBRC 100126 / VC-16), this protein is UPF0175 protein AF_0597.